We begin with the raw amino-acid sequence, 308 residues long: Ribonuclease Z (308 aa).

Zn(2+) contacts are provided by H60, H62, D64, H65, H140, D209, and H269. Catalysis depends on D64, which acts as the Proton acceptor.

It belongs to the RNase Z family. Homodimer. It depends on Zn(2+) as a cofactor.

It catalyses the reaction Endonucleolytic cleavage of RNA, removing extra 3' nucleotides from tRNA precursor, generating 3' termini of tRNAs. A 3'-hydroxy group is left at the tRNA terminus and a 5'-phosphoryl group is left at the trailer molecule.. In terms of biological role, zinc phosphodiesterase, which displays some tRNA 3'-processing endonuclease activity. Probably involved in tRNA maturation, by removing a 3'-trailer from precursor tRNA. This is Ribonuclease Z from Methanococcus maripaludis (strain C6 / ATCC BAA-1332).